Here is a 154-residue protein sequence, read N- to C-terminus: MRCPTCQYNGTRVVDSRPADDGNSIRRRRECEKCGFRFTTFEKVEESPLIVVKKDGAREEFAREKVRRGLIRACEKRPVSAEQIEEIVNEVERELRNIGDSEIASDLIGEKVMNKLANLDEVAYVRFASVYRQFKDISVFVEELKDLMEKNKDR.

A zinc finger spans residues 3-34 (CPTCQYNGTRVVDSRPADDGNSIRRRRECEKC). Residues 49 to 139 (LIVVKKDGAR…VYRQFKDISV (91 aa)) form the ATP-cone domain.

This sequence belongs to the NrdR family. The cofactor is Zn(2+).

Negatively regulates transcription of bacterial ribonucleotide reductase nrd genes and operons by binding to NrdR-boxes. In Listeria monocytogenes serotype 4a (strain HCC23), this protein is Transcriptional repressor NrdR.